A 337-amino-acid chain; its full sequence is Adenylosuccinate synthetase (337 aa).

Residues 12–18 (GDEGKGK) and 42–44 (GHT) contribute to the GTP site. Aspartate 13 functions as the Proton acceptor in the catalytic mechanism. Mg(2+) contacts are provided by aspartate 13 and glycine 42. IMP contacts are provided by residues 13–16 (DEGK), 40–43 (NAGH), threonine 124, arginine 138, glutamine 176, threonine 191, and arginine 253. Catalysis depends on histidine 43, which acts as the Proton donor. 249 to 255 (TVTGRRR) provides a ligand contact to substrate. GTP-binding positions include arginine 255, 281–283 (GVD), and 321–323 (STG).

It belongs to the adenylosuccinate synthetase family. In terms of assembly, homodimer. Requires Mg(2+) as cofactor.

The protein resides in the cytoplasm. The catalysed reaction is IMP + L-aspartate + GTP = N(6)-(1,2-dicarboxyethyl)-AMP + GDP + phosphate + 2 H(+). It functions in the pathway purine metabolism; AMP biosynthesis via de novo pathway; AMP from IMP: step 1/2. Its function is as follows. Plays an important role in the de novo pathway of purine nucleotide biosynthesis. Catalyzes the first committed step in the biosynthesis of AMP from IMP. The protein is Adenylosuccinate synthetase of Archaeoglobus fulgidus (strain ATCC 49558 / DSM 4304 / JCM 9628 / NBRC 100126 / VC-16).